A 265-amino-acid polypeptide reads, in one-letter code: Phosphatidylglycerol--prolipoprotein diacylglyceryl transferase (265 aa).

7 helical membrane passes run 17-37 (VAVRWYGLMYLLAFVLFVVLG), 57-77 (LLLYGVLGVIIGGRLGEVLFY), 89-109 (ILAVWKGGMSFHGGFLGVLVA), 127-147 (FIAPLVPTGLAAGRIGNFING), 176-196 (QLYQAAGEGLLLFAIVWVFAA), 201-218 (LRAVSAVFLIGYGSLRFV), and 233-253 (LVPGLSTAQWLCVPMVVVGLA). Residue Arg140 coordinates a 1,2-diacyl-sn-glycero-3-phospho-(1'-sn-glycerol).

This sequence belongs to the Lgt family.

The protein resides in the cell inner membrane. The enzyme catalyses L-cysteinyl-[prolipoprotein] + a 1,2-diacyl-sn-glycero-3-phospho-(1'-sn-glycerol) = an S-1,2-diacyl-sn-glyceryl-L-cysteinyl-[prolipoprotein] + sn-glycerol 1-phosphate + H(+). The protein operates within protein modification; lipoprotein biosynthesis (diacylglyceryl transfer). Functionally, catalyzes the transfer of the diacylglyceryl group from phosphatidylglycerol to the sulfhydryl group of the N-terminal cysteine of a prolipoprotein, the first step in the formation of mature lipoproteins. The chain is Phosphatidylglycerol--prolipoprotein diacylglyceryl transferase from Azoarcus sp. (strain BH72).